The following is a 446-amino-acid chain: N-succinylarginine dihydrolase (446 aa).

Substrate is bound by residues Ala-19 to Ser-28, Asn-110, and His-137 to Arg-138. The active site involves Glu-174. Arg-214 is a binding site for substrate. His-250 is an active-site residue. Residues Asp-252 and Asn-363 each coordinate substrate. Cys-369 functions as the Nucleophile in the catalytic mechanism.

The protein belongs to the succinylarginine dihydrolase family. Homodimer.

The catalysed reaction is N(2)-succinyl-L-arginine + 2 H2O + 2 H(+) = N(2)-succinyl-L-ornithine + 2 NH4(+) + CO2. Its pathway is amino-acid degradation; L-arginine degradation via AST pathway; L-glutamate and succinate from L-arginine: step 2/5. Functionally, catalyzes the hydrolysis of N(2)-succinylarginine into N(2)-succinylornithine, ammonia and CO(2). The polypeptide is N-succinylarginine dihydrolase (Pseudoalteromonas atlantica (strain T6c / ATCC BAA-1087)).